The following is a 435-amino-acid chain: Matrix extracellular phosphoglycoprotein (435 aa).

Residues 1 to 16 form the signal peptide; the sequence is MQAVSVGLFLFSMTWA. N-linked (GlcNAc...) asparagine glycosylation is present at N71. Disordered stretches follow at residues 124-145 and 166-435; these read LLQNSPGQSKHTPRARRSTHYL and LLVR…SSGD. The tract at residues 164-186 is dentonin; it reads PDLLVRGDNDVPPFSGDGQHFMH. The Cell attachment site signature appears at 169–171; that stretch reads RGD. O-linked (Xyl...) (chondroitin sulfate) serine glycosylation is present at S178. Basic and acidic residues-rich tracts occupy residues 267 to 278 and 300 to 313; these read KFRELPGKEGNR and SKEKVKGGSREHTG. Residues 337 to 346 show a composition bias toward polar residues; the sequence is GNQVTLTESQ. Basic residues-rich tracts occupy residues 382-391 and 405-415; these read AHRRTSHPTR and RRPHPHRRVST. The segment at 418–435 is ASARM motif; interaction with PHEX; sequence RDSSESSSSGSSSESSGD. Positions 422 to 435 are enriched in low complexity; the sequence is ESSSSGSSSESSGD.

Belongs to the PF07175/osteoregulin family. In terms of assembly, interacts (via ASARM motif) with PHEX; the interaction is zinc-dependent. Phosphorylated on serine residues in the ASARM motif; the phosphorylation is important for the inhibition of bone mineralization. In terms of processing, cleaved by CTSB/cathepsin B; the cleavage is blocked by metalloprotease PHEX. Expressed in osteoblasts and osteocytes.

The protein resides in the secreted. It is found in the extracellular space. Its subcellular location is the extracellular matrix. Its function is as follows. Regulates renal phosphate excretion. Regulates bone mineralization by osteoblasts and cartilage mineralization by chondrocytes. Regulates the mineralization of the extracellular matrix of the craniofacial complex, such as teeth, bone and cartilage. Increases dental pulp stem cell proliferation. The sequence is that of Matrix extracellular phosphoglycoprotein from Rattus norvegicus (Rat).